Here is a 263-residue protein sequence, read N- to C-terminus: MLALRLLNVVAPAYFLCISLVTFVLQLFLFLPSMREDPTATPLFSPAVLHGALFLFLSANALGNYILVVQNSPDDLGACQGTSSQRPQRPPPSTHFCRVCARVTLRHDHHCFFTGNCIGSRNMRNFILFCLYTSLACLYSMVAGVAYISAVLSISFAHPLAFLTLLPTSISQFFSGAVLGSDMFVILMLYLWFAVGLACAGFCCHQLLLILRGQTRYQVRKGVAVRARPWRKNLQEVFGKRWLLGLLVPMFNVGTESSKQQDK.

Over Met1–Val9 the chain is Cytoplasmic. Residues Val10–Phe30 traverse the membrane as a helical segment. Topologically, residues Leu31–Ala47 are lumenal. A helical membrane pass occupies residues Val48 to Val68. Over Val69 to Asn125 the chain is Cytoplasmic. The DHHC domain maps to Pro91–Leu131. Cys111 functions as the S-palmitoyl cysteine intermediate in the catalytic mechanism. A run of 2 helical transmembrane segments spans residues Phe126–Ala146 and Tyr147–Pro167. The Cytoplasmic segment spans residues Thr168–Asp182. The helical transmembrane segment at Met183–Cys203 threads the bilayer. The Lumenal segment spans residues Cys204–Lys263.

This sequence belongs to the DHHC palmitoyltransferase family. As to quaternary structure, interacts with CNN3.

Its subcellular location is the endoplasmic reticulum membrane. The protein resides in the golgi apparatus membrane. The enzyme catalyses L-cysteinyl-[protein] + hexadecanoyl-CoA = S-hexadecanoyl-L-cysteinyl-[protein] + CoA. Palmitoyltransferase that could catalyze the addition of palmitate onto various protein substrates and be involved in a variety of cellular processes. Catalyzes the palmitoylation of KCNMA1, regulating localization of KCNMA1 to the plasma membrane. Might also mediate palmitoylation of CNN3. This Rattus norvegicus (Rat) protein is Palmitoyltransferase ZDHHC22.